Reading from the N-terminus, the 190-residue chain is Biphenyl-2,3-diol 1,2-dioxygenase 2 (190 aa).

The VOC domain occupies 6–124 (KFAHVVLQTS…DGNFVELQID (119 aa)). Residues His9, His72, and Glu120 each coordinate Fe cation.

Belongs to the extradiol ring-cleavage dioxygenase family. As to quaternary structure, homohexamer. It depends on Fe(2+) as a cofactor.

The enzyme catalyses biphenyl-2,3-diol + O2 = 2-hydroxy-6-oxo-6-phenylhexa-2,4-dienoate + H(+). It functions in the pathway xenobiotic degradation; biphenyl degradation; 2-hydroxy-2,4-pentadienoate and benzoate from biphenyl: step 3/4. The chain is Biphenyl-2,3-diol 1,2-dioxygenase 2 (bphC2) from Rhodococcus globerulus.